The sequence spans 186 residues: dTTP/UTP pyrophosphatase (186 aa).

The active-site Proton acceptor is D70.

It belongs to the Maf family. YhdE subfamily. Requires a divalent metal cation as cofactor.

It is found in the cytoplasm. The enzyme catalyses dTTP + H2O = dTMP + diphosphate + H(+). The catalysed reaction is UTP + H2O = UMP + diphosphate + H(+). In terms of biological role, nucleoside triphosphate pyrophosphatase that hydrolyzes dTTP and UTP. May have a dual role in cell division arrest and in preventing the incorporation of modified nucleotides into cellular nucleic acids. In Vibrio vulnificus (strain CMCP6), this protein is dTTP/UTP pyrophosphatase.